A 287-amino-acid polypeptide reads, in one-letter code: Ribonuclease Z (287 aa).

Residues His-64, His-66, Asp-68, His-69, His-124, Asp-191, and His-250 each contribute to the Zn(2+) site. Residue Asp-68 is the Proton acceptor of the active site.

The protein belongs to the RNase Z family. In terms of assembly, homodimer. The cofactor is Zn(2+).

The enzyme catalyses Endonucleolytic cleavage of RNA, removing extra 3' nucleotides from tRNA precursor, generating 3' termini of tRNAs. A 3'-hydroxy group is left at the tRNA terminus and a 5'-phosphoryl group is left at the trailer molecule.. Its function is as follows. Zinc phosphodiesterase, which displays some tRNA 3'-processing endonuclease activity. Probably involved in tRNA maturation, by removing a 3'-trailer from precursor tRNA. The chain is Ribonuclease Z from Pyrobaculum neutrophilum (strain DSM 2338 / JCM 9278 / NBRC 100436 / V24Sta) (Thermoproteus neutrophilus).